A 310-amino-acid polypeptide reads, in one-letter code: Methionyl-tRNA formyltransferase (310 aa).

114 to 117 lines the (6S)-5,6,7,8-tetrahydrofolate pocket; that stretch reads SLLP.

This sequence belongs to the Fmt family.

It catalyses the reaction L-methionyl-tRNA(fMet) + (6R)-10-formyltetrahydrofolate = N-formyl-L-methionyl-tRNA(fMet) + (6S)-5,6,7,8-tetrahydrofolate + H(+). Functionally, attaches a formyl group to the free amino group of methionyl-tRNA(fMet). The formyl group appears to play a dual role in the initiator identity of N-formylmethionyl-tRNA by promoting its recognition by IF2 and preventing the misappropriation of this tRNA by the elongation apparatus. In Granulibacter bethesdensis (strain ATCC BAA-1260 / CGDNIH1), this protein is Methionyl-tRNA formyltransferase.